We begin with the raw amino-acid sequence, 78 residues long: Large ribosomal subunit protein bL28 (78 aa).

This sequence belongs to the bacterial ribosomal protein bL28 family.

This Erwinia tasmaniensis (strain DSM 17950 / CFBP 7177 / CIP 109463 / NCPPB 4357 / Et1/99) protein is Large ribosomal subunit protein bL28.